Here is a 367-residue protein sequence, read N- to C-terminus: Voltage-gated potassium channel subunit beta-2 (367 aa).

Residues T56, W57, Q63, and D85 each contribute to the NADP(+) site. Y90 acts as the Proton donor/acceptor in catalysis. Residues N158, S188, R189, Q214, W243, S244, P245, L246, A247, C248, K254, Y262, R264, G323, S325, Q329, E332, and N333 each coordinate NADP(+).

The protein belongs to the shaker potassium channel beta subunit family. As to quaternary structure, forms heteromultimeric complex with alpha subunits.

The protein localises to the cytoplasm. Its subcellular location is the membrane. The protein resides in the cell membrane. It is found in the cell projection. It localises to the axon. The protein localises to the synapse. Its subcellular location is the synaptosome. The protein resides in the cytoskeleton. In terms of biological role, regulatory subunit of the voltage-gated potassium (Kv) Shaker channels composed of pore-forming and potassium-conducting alpha subunits and of regulatory beta subunits. The beta-2/KCNAB2 cytoplasmic subunit may promote potassium channel closure via a mechanism that does not involve physical obstruction of the channel pore. Enhances current amplitude of Kv1.1/KCNA1 and Kv2.2/KCNA2 channels. May display nicotinamide adenine dinucleotide phosphate (NADPH)-dependent aldoketoreductase activity by catalyzing the NADPH-dependent reduction of a wide range of aldehyde and ketone substrates. The binding of oxidized and reduced nucleotide may alter Kv channel gating and contribute to dynamic fine tuning of cell excitability. This is Voltage-gated potassium channel subunit beta-2 (kcnab2) from Xenopus laevis (African clawed frog).